A 229-amino-acid polypeptide reads, in one-letter code: Ribonuclease 3 (229 aa).

One can recognise an RNase III domain in the interval 4 to 133 (WEELQESVGF…FIGALYLDNG (130 aa)). Glu-46 serves as a coordination point for Mg(2+). The active site involves Asp-50. The Mg(2+) site is built by Asp-119 and Glu-122. Glu-122 is an active-site residue. The 70-residue stretch at 159 to 228 (DYKTQLQEIV…AQFAINQLTH (70 aa)) folds into the DRBM domain.

The protein belongs to the ribonuclease III family. Homodimer. Mg(2+) is required as a cofactor.

Its subcellular location is the cytoplasm. It carries out the reaction Endonucleolytic cleavage to 5'-phosphomonoester.. Its function is as follows. Digests double-stranded RNA. Involved in the processing of primary rRNA transcript to yield the immediate precursors to the large and small rRNAs (23S and 16S). Processes some mRNAs, and tRNAs when they are encoded in the rRNA operon. Processes pre-crRNA and tracrRNA of type II CRISPR loci if present in the organism. The protein is Ribonuclease 3 of Listeria innocua serovar 6a (strain ATCC BAA-680 / CLIP 11262).